The sequence spans 1317 residues: Toxin protein Tse5 (1317 aa).

The disordered stretch occupies residues 395–419 (GRETRRRRDGQGRMLEEESPGKARY). The segment covering 403 to 415 (DGQGRMLEEESPG) has biased composition (basic and acidic residues).

Functionally, toxin secreted by the H1 type VI (H1-T6SS) secretion system that acts on bacterial target cells. The producing bacterium is protected by a cognate immunity protein. The chain is Toxin protein Tse5 from Pseudomonas aeruginosa (strain ATCC 15692 / DSM 22644 / CIP 104116 / JCM 14847 / LMG 12228 / 1C / PRS 101 / PAO1).